Here is a 793-residue protein sequence, read N- to C-terminus: Pentatricopeptide repeat-containing protein At1g03100, mitochondrial (793 aa).

A mitochondrion-targeting transit peptide spans 1-87; the sequence is MFSLRKTKLQ…REAISSISGS (87 aa). 11 PPR repeats span residues 257-291, 292-322, 330-364, 458-492, 495-529, 530-564, 565-599, 601-631, 637-671, 672-707, and 713-747; these read NTQV…GVKA, DANL…IDEA, FWQF…GKVA, TEEI…DSPV, DNSM…GVRT, GSSV…GIQL, DSSC…KILR, GNQK…IREV, GVHD…GHSP, NAQT…AAAT, and DQEL…NMFV.

It belongs to the PPR family. P subfamily.

The protein resides in the mitochondrion. This Arabidopsis thaliana (Mouse-ear cress) protein is Pentatricopeptide repeat-containing protein At1g03100, mitochondrial.